Here is a 268-residue protein sequence, read N- to C-terminus: Urease accessory protein UreD (268 aa).

This sequence belongs to the UreD family. UreD, UreF and UreG form a complex that acts as a GTP-hydrolysis-dependent molecular chaperone, activating the urease apoprotein by helping to assemble the nickel containing metallocenter of UreC. The UreE protein probably delivers the nickel.

It localises to the cytoplasm. Required for maturation of urease via the functional incorporation of the urease nickel metallocenter. In Lysinibacillus sphaericus (strain C3-41), this protein is Urease accessory protein UreD.